A 130-amino-acid polypeptide reads, in one-letter code: Modulator protein MzrA (130 aa).

At 1–15 the chain is on the cytoplasmic side; it reads MIAAFIKRHAPQRRL. The chain crosses the membrane as a helical span at residues 16 to 36; it reads SLWLALPVVALLALVMMPALF. Residues 37-130 lie on the Periplasmic side of the membrane; that stretch reads RHDSALQIRA…RISFKPQSIG (94 aa).

The protein belongs to the MzrA family. Interacts with EnvZ.

Its subcellular location is the cell inner membrane. In terms of biological role, modulates the activity of the EnvZ/OmpR two-component regulatory system, probably by directly modulating EnvZ enzymatic activity and increasing stability of phosphorylated OmpR. The sequence is that of Modulator protein MzrA from Erwinia tasmaniensis (strain DSM 17950 / CFBP 7177 / CIP 109463 / NCPPB 4357 / Et1/99).